We begin with the raw amino-acid sequence, 303 residues long: 1D-myo-inositol 2-acetamido-2-deoxy-alpha-D-glucopyranoside deacetylase (303 aa).

The Zn(2+) site is built by His15, Asp18, and His157.

Belongs to the MshB deacetylase family. The cofactor is Zn(2+).

The catalysed reaction is 1D-myo-inositol 2-acetamido-2-deoxy-alpha-D-glucopyranoside + H2O = 1D-myo-inositol 2-amino-2-deoxy-alpha-D-glucopyranoside + acetate. Catalyzes the deacetylation of 1D-myo-inositol 2-acetamido-2-deoxy-alpha-D-glucopyranoside (GlcNAc-Ins) in the mycothiol biosynthesis pathway. This is 1D-myo-inositol 2-acetamido-2-deoxy-alpha-D-glucopyranoside deacetylase from Kribbella flavida (strain DSM 17836 / JCM 10339 / NBRC 14399).